We begin with the raw amino-acid sequence, 227 residues long: PKHD-type hydroxylase BamMC406_4714 (227 aa).

Positions 78–178 constitute a Fe2OG dioxygenase domain; the sequence is KVFPPLFNRY…RVASFFWIQS (101 aa). Residues His96, Asp98, and His159 each contribute to the Fe cation site. Arg169 lines the 2-oxoglutarate pocket.

Requires Fe(2+) as cofactor. L-ascorbate serves as cofactor.

In Burkholderia ambifaria (strain MC40-6), this protein is PKHD-type hydroxylase BamMC406_4714.